A 212-amino-acid polypeptide reads, in one-letter code: Peptide methionine sulfoxide reductase MsrA (212 aa).

The active site involves cysteine 52.

Belongs to the MsrA Met sulfoxide reductase family.

It catalyses the reaction L-methionyl-[protein] + [thioredoxin]-disulfide + H2O = L-methionyl-(S)-S-oxide-[protein] + [thioredoxin]-dithiol. The catalysed reaction is [thioredoxin]-disulfide + L-methionine + H2O = L-methionine (S)-S-oxide + [thioredoxin]-dithiol. In terms of biological role, has an important function as a repair enzyme for proteins that have been inactivated by oxidation. Catalyzes the reversible oxidation-reduction of methionine sulfoxide in proteins to methionine. The polypeptide is Peptide methionine sulfoxide reductase MsrA (Shigella dysenteriae serotype 1 (strain Sd197)).